Here is a 414-residue protein sequence, read N- to C-terminus: Arrestin domain-containing protein 3 (414 aa).

Short sequence motifs (PPxY motif) lie at residues 346 to 349 (PPSY) and 391 to 394 (PPLY). The segment at 393 to 414 (LYSEIDPNPDQSSEDRPSCPSR) is disordered. Over residues 405–414 (SEDRPSCPSR) the composition is skewed to basic and acidic residues.

This sequence belongs to the arrestin family. In terms of assembly, interacts (via PPxY motifs) with NEDD4 (via WW domains). Interacts with ADRB2. Interacts with ADRB3. Interacts with HGS (via PPxY motifs). Does not bind TXN (thioredoxin). Interacts with ITCH. As to expression, detected in visceral fat, subcutaneous fat, brown fat and skeletal muscle, and at lower levels in kidney.

Its subcellular location is the cytoplasm. The protein localises to the cell membrane. The protein resides in the lysosome. It localises to the endosome. It is found in the early endosome. Its function is as follows. Adapter protein that plays a role in regulating cell-surface expression of adrenergic receptors and probably also other G protein-coupled receptors. Plays a role in NEDD4-mediated ubiquitination and endocytosis af activated ADRB2 and subsequent ADRB2 degradation. May recruit NEDD4 to ADRB2. Alternatively, may function as adapter protein that does not play a major role in recruiting NEDD4 to ADRB2, but rather plays a role in a targeting ADRB2 to endosomes. In Mus musculus (Mouse), this protein is Arrestin domain-containing protein 3 (Arrdc3).